The sequence spans 194 residues: MSPFSIVLIGFAMSTDAFAAAIGKGAAMRKPQWRDALRAGLIFGCIEAITPVIGWLLGRAAASYVSAYDHWIAFVLLGALGTHMIVAGLRNGPEDAEDAASDTPKRHGVLGLATTGFATSIDAMAVGVSLAFLDVHIGVVAVVVGLCTFSMVTAGVMLGRALGNLIGKRAEMLGGLILVIVGSVILYEHLSGAG.

Helical transmembrane passes span 3-23 (PFSI…AAIG), 37-57 (LRAG…GWLL), 69-89 (DHWI…VAGL), 110-132 (LGLA…SLAF), 147-167 (CTFS…NLIG), and 172-192 (MLGG…HLSG).

The protein belongs to the MntP (TC 9.B.29) family.

The protein resides in the cell inner membrane. In terms of biological role, probably functions as a manganese efflux pump. This is Putative manganese efflux pump MntP from Xanthomonas axonopodis pv. citri (strain 306).